The following is a 334-amino-acid chain: Nucleoid-associated protein YPTS_1390 (334 aa).

It belongs to the YejK family.

It is found in the cytoplasm. The protein resides in the nucleoid. The polypeptide is Nucleoid-associated protein YPTS_1390 (Yersinia pseudotuberculosis serotype IB (strain PB1/+)).